The following is a 292-amino-acid chain: Glycine--tRNA ligase alpha subunit (292 aa).

Belongs to the class-II aminoacyl-tRNA synthetase family. As to quaternary structure, tetramer of two alpha and two beta subunits.

The protein localises to the cytoplasm. It catalyses the reaction tRNA(Gly) + glycine + ATP = glycyl-tRNA(Gly) + AMP + diphosphate. The polypeptide is Glycine--tRNA ligase alpha subunit (Synechococcus sp. (strain ATCC 27144 / PCC 6301 / SAUG 1402/1) (Anacystis nidulans)).